The following is a 643-amino-acid chain: 1-deoxy-D-xylulose-5-phosphate synthase (643 aa).

Residues His78 and Ala119–Ser121 contribute to the thiamine diphosphate site. Mg(2+) is bound at residue Asp150. Residues Gly151 to Ser152, Asn179, Tyr288, and Glu370 contribute to the thiamine diphosphate site. A Mg(2+)-binding site is contributed by Asn179.

Belongs to the transketolase family. DXPS subfamily. Homodimer. Mg(2+) is required as a cofactor. Requires thiamine diphosphate as cofactor.

It carries out the reaction D-glyceraldehyde 3-phosphate + pyruvate + H(+) = 1-deoxy-D-xylulose 5-phosphate + CO2. It functions in the pathway metabolic intermediate biosynthesis; 1-deoxy-D-xylulose 5-phosphate biosynthesis; 1-deoxy-D-xylulose 5-phosphate from D-glyceraldehyde 3-phosphate and pyruvate: step 1/1. In terms of biological role, catalyzes the acyloin condensation reaction between C atoms 2 and 3 of pyruvate and glyceraldehyde 3-phosphate to yield 1-deoxy-D-xylulose-5-phosphate (DXP). The protein is 1-deoxy-D-xylulose-5-phosphate synthase of Brucella melitensis biotype 2 (strain ATCC 23457).